A 303-amino-acid polypeptide reads, in one-letter code: MEWAPMNIRAPTRLAVGRVRFYGQHHGEVNCSAFSPDGRTLLTASDDGCVYVWGTKSGRLLWRLAGHRGPVKSCCFSPDGRLIASSSSDHSIRLWDVARSKCLHVLKGHQRSVETVSFSPDSKQLASGGWDKRAIVWEVQSGRRVHLLVGHCDSIQSSDFSPTSDSLATGSWDSTVHIWDLRASTPVVSYHNLEGHTGNISCLCYSASGLLASGSWDKTICVWKPTTNNLPLQLKGHTIWVNSLAFSPDELKLASAGYSRTVKVWDCLTGKCLETLKGMLDVAHACIFTPDGKLLVSGAAVTR.

7 WD repeats span residues 24–63 (QHHG…LLWR), 66–105 (GHRG…CLHV), 108–147 (GHQR…RVHL), 150–189 (GHCD…PVVS), 195–233 (GHTG…LPLQ), 236–277 (GHTI…ETLK), and 279–303 (MLDV…AVTR).

This is WD repeat-containing protein 38 (Wdr38) from Mus musculus (Mouse).